Reading from the N-terminus, the 150-residue chain is SsrA-binding protein (150 aa).

This sequence belongs to the SmpB family.

It localises to the cytoplasm. Required for rescue of stalled ribosomes mediated by trans-translation. Binds to transfer-messenger RNA (tmRNA), required for stable association of tmRNA with ribosomes. tmRNA and SmpB together mimic tRNA shape, replacing the anticodon stem-loop with SmpB. tmRNA is encoded by the ssrA gene; the 2 termini fold to resemble tRNA(Ala) and it encodes a 'tag peptide', a short internal open reading frame. During trans-translation Ala-aminoacylated tmRNA acts like a tRNA, entering the A-site of stalled ribosomes, displacing the stalled mRNA. The ribosome then switches to translate the ORF on the tmRNA; the nascent peptide is terminated with the 'tag peptide' encoded by the tmRNA and targeted for degradation. The ribosome is freed to recommence translation, which seems to be the essential function of trans-translation. The sequence is that of SsrA-binding protein from Rubrobacter xylanophilus (strain DSM 9941 / JCM 11954 / NBRC 16129 / PRD-1).